A 202-amino-acid polypeptide reads, in one-letter code: uncharacterized protein (202 aa).

Residues 1–19 (MRRKNGFSVASVFILCSIA) form the signal peptide. A helical membrane pass occupies residues 177-199 (FLASSSSSFSSFLPSIAIILFFV).

It localises to the membrane. This is an uncharacterized protein from Caenorhabditis elegans.